The chain runs to 602 residues: Aspartate--tRNA(Asp/Asn) ligase (602 aa).

E176 lines the L-aspartate pocket. The interval 200–203 (QQFK) is aspartate. L-aspartate is bound by residues R222 and H452. 222–224 (RDE) is a binding site for ATP. E490 provides a ligand contact to ATP. R497 provides a ligand contact to L-aspartate. ATP is bound at residue 542–545 (GIDR).

The protein belongs to the class-II aminoacyl-tRNA synthetase family. Type 1 subfamily. As to quaternary structure, homodimer.

The protein resides in the cytoplasm. It carries out the reaction tRNA(Asx) + L-aspartate + ATP = L-aspartyl-tRNA(Asx) + AMP + diphosphate. In terms of biological role, aspartyl-tRNA synthetase with relaxed tRNA specificity since it is able to aspartylate not only its cognate tRNA(Asp) but also tRNA(Asn). Reaction proceeds in two steps: L-aspartate is first activated by ATP to form Asp-AMP and then transferred to the acceptor end of tRNA(Asp/Asn). The sequence is that of Aspartate--tRNA(Asp/Asn) ligase from Rickettsia bellii (strain OSU 85-389).